The primary structure comprises 371 residues: Ligninase LG2 (371 aa).

Residues 1–21 (MAFKQLFAAITVALSLTAANA) form the signal peptide. Residues 22–28 (AVVKEKR) constitute a propeptide that is removed on maturation. Intrachain disulfides connect cysteine 31–cysteine 43, cysteine 42–cysteine 313, cysteine 62–cysteine 148, and cysteine 277–cysteine 345. Histidine 75 acts as the Proton acceptor in catalysis. Ca(2+)-binding residues include aspartate 76, glycine 94, aspartate 96, and serine 98. Tryptophan 199 bears the 3-hydroxytryptophan mark. Histidine 204 is a binding site for heme b. Ca(2+)-binding residues include serine 205, aspartate 222, threonine 224, isoleucine 227, and aspartate 229. An N-linked (GlcNAc...) asparagine glycan is attached at asparagine 285.

Belongs to the peroxidase family. Ligninase subfamily. It depends on Ca(2+) as a cofactor. The cofactor is heme b.

The catalysed reaction is 1-(3,4-dimethoxyphenyl)-2-(2-methoxyphenoxy)propane-1,3-diol + H2O2 = 3,4-dimethoxybenzaldehyde + guaiacol + glycolaldehyde + H2O. It catalyses the reaction 2 (3,4-dimethoxyphenyl)methanol + H2O2 = 2 (3,4-dimethoxyphenyl)methanol radical + 2 H2O. Its pathway is secondary metabolite metabolism; lignin degradation. Its function is as follows. Depolymerization of lignin. Catalyzes the C(alpha)-C(beta) cleavage of the propyl side chains of lignin. This is Ligninase LG2 (GLG2) from Phanerodontia chrysosporium (White-rot fungus).